Reading from the N-terminus, the 470-residue chain is A-type ATP synthase subunit B (470 aa).

Belongs to the ATPase alpha/beta chains family. Has multiple subunits with at least A(3), B(3), C, D, E, F, H, I and proteolipid K(x).

It localises to the cell membrane. Component of the A-type ATP synthase that produces ATP from ADP in the presence of a proton gradient across the membrane. The B chain is a regulatory subunit. The chain is A-type ATP synthase subunit B from Haloarcula marismortui (strain ATCC 43049 / DSM 3752 / JCM 8966 / VKM B-1809) (Halobacterium marismortui).